Reading from the N-terminus, the 180-residue chain is Large ribosomal subunit protein uL5 (180 aa).

It belongs to the universal ribosomal protein uL5 family. As to quaternary structure, part of the 50S ribosomal subunit; part of the 5S rRNA/L5/L18/L25 subcomplex. Contacts the 5S rRNA and the P site tRNA. Forms a bridge to the 30S subunit in the 70S ribosome.

Functionally, this is one of the proteins that bind and probably mediate the attachment of the 5S RNA into the large ribosomal subunit, where it forms part of the central protuberance. In the 70S ribosome it contacts protein S13 of the 30S subunit (bridge B1b), connecting the 2 subunits; this bridge is implicated in subunit movement. Contacts the P site tRNA; the 5S rRNA and some of its associated proteins might help stabilize positioning of ribosome-bound tRNAs. The protein is Large ribosomal subunit protein uL5 of Chloroflexus aggregans (strain MD-66 / DSM 9485).